The primary structure comprises 154 residues: ATP synthase subunit b', chloroplastic (154 aa).

A helical transmembrane segment spans residues 22 to 42 (GTLPLIAIQFLILMFLLNILL).

Belongs to the ATPase B chain family. In terms of assembly, F-type ATPases have 2 components, F(1) - the catalytic core - and F(0) - the membrane proton channel. F(1) has five subunits: alpha(3), beta(3), gamma(1), delta(1), epsilon(1). F(0) has four main subunits: a(1), b(1), b'(1) and c(10-14). The alpha and beta chains form an alternating ring which encloses part of the gamma chain. F(1) is attached to F(0) by a central stalk formed by the gamma and epsilon chains, while a peripheral stalk is formed by the delta, b and b' chains.

It is found in the plastid. It localises to the chloroplast thylakoid membrane. In terms of biological role, f(1)F(0) ATP synthase produces ATP from ADP in the presence of a proton or sodium gradient. F-type ATPases consist of two structural domains, F(1) containing the extramembraneous catalytic core and F(0) containing the membrane proton channel, linked together by a central stalk and a peripheral stalk. During catalysis, ATP synthesis in the catalytic domain of F(1) is coupled via a rotary mechanism of the central stalk subunits to proton translocation. Component of the F(0) channel, it forms part of the peripheral stalk, linking F(1) to F(0). The b'-subunit is a diverged and duplicated form of b found in plants and photosynthetic bacteria. This is ATP synthase subunit b', chloroplastic from Vaucheria litorea (Yellow-green alga).